Consider the following 348-residue polypeptide: Anthranilate phosphoribosyltransferase (348 aa).

5-phospho-alpha-D-ribose 1-diphosphate contacts are provided by residues Gly-81, 84–85, Thr-89, 91–94, 109–117, and Ser-121; these read GD, NIST, and KHGNRSSSG. Anthranilate is bound at residue Gly-81. Ser-93 is a binding site for Mg(2+). Asn-112 is a binding site for anthranilate. Position 167 (Arg-167) interacts with anthranilate. Mg(2+) contacts are provided by Asp-226 and Glu-227.

Belongs to the anthranilate phosphoribosyltransferase family. In terms of assembly, homodimer. It depends on Mg(2+) as a cofactor.

The enzyme catalyses N-(5-phospho-beta-D-ribosyl)anthranilate + diphosphate = 5-phospho-alpha-D-ribose 1-diphosphate + anthranilate. The protein operates within amino-acid biosynthesis; L-tryptophan biosynthesis; L-tryptophan from chorismate: step 2/5. Its function is as follows. Catalyzes the transfer of the phosphoribosyl group of 5-phosphorylribose-1-pyrophosphate (PRPP) to anthranilate to yield N-(5'-phosphoribosyl)-anthranilate (PRA). This chain is Anthranilate phosphoribosyltransferase, found in Nitrosopumilus maritimus (strain SCM1).